The chain runs to 363 residues: NAD(P)H-quinone oxidoreductase subunit 1, chloroplastic (363 aa).

Helical transmembrane passes span 30 to 50 (LVPI…IVWL), 98 to 118 (FSIG…VIPF), 129 to 149 (IGVF…LMSG), 165 to 185 (AAQS…ISLL), 203 to 223 (LWGW…ISSL), 248 to 268 (YSGI…LVSS), 269 to 289 (LFVT…IFVP), 300 to 320 (VFGT…FLFI), and 334 to 354 (DQLL…NLLL).

Belongs to the complex I subunit 1 family. As to quaternary structure, NDH is composed of at least 16 different subunits, 5 of which are encoded in the nucleus.

It is found in the plastid. The protein localises to the chloroplast thylakoid membrane. The enzyme catalyses a plastoquinone + NADH + (n+1) H(+)(in) = a plastoquinol + NAD(+) + n H(+)(out). The catalysed reaction is a plastoquinone + NADPH + (n+1) H(+)(in) = a plastoquinol + NADP(+) + n H(+)(out). Its function is as follows. NDH shuttles electrons from NAD(P)H:plastoquinone, via FMN and iron-sulfur (Fe-S) centers, to quinones in the photosynthetic chain and possibly in a chloroplast respiratory chain. The immediate electron acceptor for the enzyme in this species is believed to be plastoquinone. Couples the redox reaction to proton translocation, and thus conserves the redox energy in a proton gradient. In Oenothera elata subsp. hookeri (Hooker's evening primrose), this protein is NAD(P)H-quinone oxidoreductase subunit 1, chloroplastic.